The chain runs to 423 residues: UDP-N-acetylglucosamine 1-carboxyvinyltransferase 2 (423 aa).

Phosphoenolpyruvate is bound at residue 23–24 (KN). Arg93 serves as a coordination point for UDP-N-acetyl-alpha-D-glucosamine. The active-site Proton donor is the Cys117. A 2-(S-cysteinyl)pyruvic acid O-phosphothioketal modification is found at Cys117. UDP-N-acetyl-alpha-D-glucosamine-binding positions include 122–126 (RPIDQ), Asp305, and Ile327.

It belongs to the EPSP synthase family. MurA subfamily.

The protein localises to the cytoplasm. The enzyme catalyses phosphoenolpyruvate + UDP-N-acetyl-alpha-D-glucosamine = UDP-N-acetyl-3-O-(1-carboxyvinyl)-alpha-D-glucosamine + phosphate. It participates in cell wall biogenesis; peptidoglycan biosynthesis. In terms of biological role, cell wall formation. Adds enolpyruvyl to UDP-N-acetylglucosamine. The chain is UDP-N-acetylglucosamine 1-carboxyvinyltransferase 2 from Listeria innocua serovar 6a (strain ATCC BAA-680 / CLIP 11262).